Consider the following 134-residue polypeptide: Methylglyoxal synthase (134 aa).

Positions 1–134 constitute an MGS-like domain; the sequence is MHIALIAHDE…DWRDLRRNDE (134 aa). Substrate-binding positions include H8, K12, 34–37, and 54–55; these read TGTT and SG. D60 serves as the catalytic Proton donor/acceptor. H87 lines the substrate pocket.

Belongs to the methylglyoxal synthase family.

The enzyme catalyses dihydroxyacetone phosphate = methylglyoxal + phosphate. Catalyzes the formation of methylglyoxal from dihydroxyacetone phosphate. The protein is Methylglyoxal synthase of Listeria innocua serovar 6a (strain ATCC BAA-680 / CLIP 11262).